A 227-amino-acid chain; its full sequence is Claudin-15 (227 aa).

Position 1 (M1) is a topological domain, cytoplasmic. A helical transmembrane segment spans residues S2–L24. The Extracellular portion of the chain corresponds to P25–Y74. The cysteines at positions 52 and 62 are disulfide-linked. Residues V75 to G99 form a helical membrane-spanning segment. At L100–K115 the chain is on the cytoplasmic side. S111 is subject to Phosphoserine. The chain crosses the membrane as a helical span at residues L116–V140. Topologically, residues N141–G159 are extracellular. Residues F146–F147 form an important for the formation of tight-junction strand-like structures region. The chain crosses the membrane as a helical span at residues S160 to T182. Over C183–V227 the chain is Cytoplasmic. A phosphoserine mark is found at S211, S214, and S217.

It belongs to the claudin family. Can form homo- and heteropolymeric tight junction strands. Palmitoylated. In terms of tissue distribution, detected in kidney, jejunum and colon (at protein level).

Its subcellular location is the cell junction. The protein resides in the tight junction. It localises to the cell membrane. It catalyses the reaction Na(+)(in) = Na(+)(out). It carries out the reaction K(+)(in) = K(+)(out). The enzyme catalyses Cs(+)(in) = Cs(+)(out). The catalysed reaction is Rb(+)(in) = Rb(+)(out). It catalyses the reaction Li(+)(in) = Li(+)(out). It carries out the reaction NH4(+)(in) = NH4(+)(out). The enzyme catalyses methylamine(out) = methylamine(in). The catalysed reaction is H2O(in) = H2O(out). Forms paracellular channels: polymerizes in tight junction strands with cation- and water-selective channels through the strands, conveying epithelial permeability in a process known as paracellular tight junction permeability. In intestinal epithelium, allows for sodium and water fluxes from the peritoneal side to the lumen of the intestine to regulate nutrient absorption and intestinal morphogenesis. This chain is Claudin-15, found in Rattus norvegicus (Rat).